A 487-amino-acid chain; its full sequence is Aspartyl/glutamyl-tRNA(Asn/Gln) amidotransferase subunit B (487 aa).

The protein belongs to the GatB/GatE family. GatB subfamily. As to quaternary structure, heterotrimer of A, B and C subunits.

The catalysed reaction is L-glutamyl-tRNA(Gln) + L-glutamine + ATP + H2O = L-glutaminyl-tRNA(Gln) + L-glutamate + ADP + phosphate + H(+). The enzyme catalyses L-aspartyl-tRNA(Asn) + L-glutamine + ATP + H2O = L-asparaginyl-tRNA(Asn) + L-glutamate + ADP + phosphate + 2 H(+). Its function is as follows. Allows the formation of correctly charged Asn-tRNA(Asn) or Gln-tRNA(Gln) through the transamidation of misacylated Asp-tRNA(Asn) or Glu-tRNA(Gln) in organisms which lack either or both of asparaginyl-tRNA or glutaminyl-tRNA synthetases. The reaction takes place in the presence of glutamine and ATP through an activated phospho-Asp-tRNA(Asn) or phospho-Glu-tRNA(Gln). The chain is Aspartyl/glutamyl-tRNA(Asn/Gln) amidotransferase subunit B from Acidiphilium cryptum (strain JF-5).